A 100-amino-acid chain; its full sequence is Urease subunit gamma (100 aa).

The protein belongs to the urease gamma subunit family. As to quaternary structure, heterotrimer of UreA (gamma), UreB (beta) and UreC (alpha) subunits. Three heterotrimers associate to form the active enzyme.

The protein resides in the cytoplasm. It carries out the reaction urea + 2 H2O + H(+) = hydrogencarbonate + 2 NH4(+). It participates in nitrogen metabolism; urea degradation; CO(2) and NH(3) from urea (urease route): step 1/1. In Frankia alni (strain DSM 45986 / CECT 9034 / ACN14a), this protein is Urease subunit gamma.